A 204-amino-acid chain; its full sequence is Cardiotrophin-2 (204 aa).

An N-terminal signal peptide occupies residues 1-22 (MYCLLATPLCLLSLLLPPLSPA). N-linked (GlcNAc...) asparagine glycosylation occurs at asparagine 44.

Belongs to the IL-6 superfamily. In terms of assembly, binds to tripartite CNTF receptor complex consisting of CNTF alpha chain, LIFR and IL6ST (in vitro). Not detected in adult tissues.

It localises to the secreted. Its function is as follows. Increases the platelet count associated with splenomegaly. May have an important role in neuronal precursor development and maturation. The chain is Cardiotrophin-2 (Ctf2) from Mus musculus (Mouse).